The primary structure comprises 390 residues: Lissencephaly-1 homolog (390 aa).

One can recognise a LisH domain in the interval 7–39 (QREEINRAVAEYLQNNGYSEAFNMLLKEASLSE). Positions 54-80 (TTVLRLQRKVNDLEAKLLESQQEINHG) form a coiled coil. WD repeat units follow at residues 104–145 (GHRL…KTLK), 146–185 (GHTD…DCLK), 189–228 (GHEH…CVFT), 231–270 (GHND…RNWY), 272–313 (EIMS…VIFT), 316–355 (AHEN…CMKA), and 358–390 (AHEH…WECR).

The protein belongs to the WD repeat LIS1/nudF family.

The protein resides in the cytoplasm. It localises to the cytoskeleton. It is found in the microtubule organizing center. The protein localises to the centrosome. Functionally, positively regulates the activity of the minus-end directed microtubule motor protein dynein. May enhance dynein-mediated microtubule sliding by targeting dynein to the microtubule plus end. Required for several dynein- and microtubule-dependent processes. The chain is Lissencephaly-1 homolog from Caenorhabditis briggsae.